The following is a 506-amino-acid chain: D-alanine--D-alanyl carrier protein ligase (506 aa).

Position 152–153 (152–153) interacts with ATP; that stretch reads TS. D197 contacts D-alanine. 292–297 contributes to the ATP binding site; that stretch reads NTYGPT. V301 contributes to the D-alanine binding site. Residues D383, 395-398, and K494 each bind ATP; that span reads YRGR. K494 is a binding site for D-alanine.

The protein belongs to the ATP-dependent AMP-binding enzyme family. DltA subfamily.

It localises to the cytoplasm. It catalyses the reaction holo-[D-alanyl-carrier protein] + D-alanine + ATP = D-alanyl-[D-alanyl-carrier protein] + AMP + diphosphate. Its pathway is cell wall biogenesis; lipoteichoic acid biosynthesis. Catalyzes the first step in the D-alanylation of lipoteichoic acid (LTA), the activation of D-alanine and its transfer onto the D-alanyl carrier protein (Dcp) DltC. In an ATP-dependent two-step reaction, forms a high energy D-alanyl-AMP intermediate, followed by transfer of the D-alanyl residue as a thiol ester to the phosphopantheinyl prosthetic group of the Dcp. D-alanylation of LTA plays an important role in modulating the properties of the cell wall in Gram-positive bacteria, influencing the net charge of the cell wall. This is D-alanine--D-alanyl carrier protein ligase from Lacticaseibacillus paracasei (strain ATCC 334 / BCRC 17002 / CCUG 31169 / CIP 107868 / KCTC 3260 / NRRL B-441) (Lactobacillus paracasei).